A 396-amino-acid chain; its full sequence is DNA polymerase processivity factor (396 aa).

The segment at 306–396 is disordered; that stretch reads AEGGESSQKV…VPKTTFNPLI (91 aa). The segment covering 376-386 has biased composition (basic and acidic residues); sequence SDSSQSRDRGK.

Belongs to the herpesviridae DNA polymerase accessory subunit family. As to quaternary structure, homooligomerizes and adopts an oligomeric ring-shaped structure composed of 6 subunits. Forms a complex with the DNA-binding protein, the DNA polymerase subunit, and the alkaline exonuclease.

Its subcellular location is the virion tegument. The protein resides in the host nucleus. Plays an essential role in the viral lytic DNA replication by acting as the polymerase accessory subunit. Stimulates the viral DNA polymerase activity and appears to function with it as a holoenzyme. Increases the processivity of the viral polymerase, probably by acting as a sliding clamp that prevents dissociation of the polymerase from the active template. This Homo sapiens (Human) protein is DNA polymerase processivity factor (ORF59).